The chain runs to 147 residues: Nudix hydrolase 1 (147 aa).

The residue at position 2 (serine 2) is an N-acetylserine. Residues isoleucine 7–proline 140 form the Nudix hydrolase domain. Residues glycine 41 to glycine 62 carry the Nudix box motif. Positions 56 and 60 each coordinate Mg(2+).

The protein belongs to the Nudix hydrolase family. Homodimer. The cofactor is Mg(2+). Mn(2+) serves as cofactor. In terms of tissue distribution, expressed in roots, stems and leaves.

Its subcellular location is the cytoplasm. It catalyses the reaction 7,8-dihydroneopterin 3'-triphosphate + H2O = 7,8-dihydroneopterin 3'-phosphate + diphosphate + H(+). It carries out the reaction NAD(+) + H2O = beta-nicotinamide D-ribonucleotide + AMP + 2 H(+). The catalysed reaction is NADH + H2O = reduced beta-nicotinamide D-ribonucleotide + AMP + 2 H(+). The enzyme catalyses 8-oxo-dGTP + H2O = 8-oxo-dGMP + diphosphate + H(+). In terms of biological role, mediates the hydrolysis of some nucleoside diphosphate derivatives. Its substrate specificity is unclear. In vitro, it can use NTP, dNTP, 8-oxo-GTP, 8-oxo-dGTP, dGTP, dATP, dTTP or dihydroneopterin triphosphate (DHNTP) as substrate. Has some NADH pyrophosphatase activity in vitro; however, such activity may not be relevant in vivo due to the high concentration of manganese used during the experiments. Plays an important role in protection against oxidative DNA and RNA damage by removing oxidatively damaged form of guanine. The protein is Nudix hydrolase 1 (NUDT1) of Arabidopsis thaliana (Mouse-ear cress).